A 118-amino-acid polypeptide reads, in one-letter code: Peptidyl-tRNA hydrolase (118 aa).

This sequence belongs to the PTH2 family.

It is found in the cytoplasm. It carries out the reaction an N-acyl-L-alpha-aminoacyl-tRNA + H2O = an N-acyl-L-amino acid + a tRNA + H(+). Functionally, the natural substrate for this enzyme may be peptidyl-tRNAs which drop off the ribosome during protein synthesis. The protein is Peptidyl-tRNA hydrolase of Thermococcus onnurineus (strain NA1).